The following is a 130-amino-acid chain: 3-hydroxyisobutyrate dehydrogenase, mitochondrial (130 aa).

Residues 1–17 (TPVG…PMAK), 25–26 (LP), and Asn30 each bind NAD(+). Residue Lys43 is modified to N6-acetyllysine. N6-acetyllysine; alternate is present on Lys47. Lys47 is modified (N6-succinyllysine; alternate). Lys101 carries the N6-succinyllysine modification.

This sequence belongs to the HIBADH-related family. 3-hydroxyisobutyrate dehydrogenase subfamily. As to quaternary structure, homodimer.

The protein resides in the mitochondrion. The catalysed reaction is 3-hydroxy-2-methylpropanoate + NAD(+) = 2-methyl-3-oxopropanoate + NADH + H(+). Its pathway is amino-acid degradation; L-valine degradation. The polypeptide is 3-hydroxyisobutyrate dehydrogenase, mitochondrial (Mesocricetus auratus (Golden hamster)).